The chain runs to 404 residues: Transcriptional repressor OPI1 (404 aa).

At Ser10 the chain carries Phosphoserine. Residues 25 to 51 (QSCRQKSQPSEDVSQADKMPASESSTT) are disordered. A compositionally biased stretch (polar residues) spans 26-37 (SCRQKSQPSEDV). The tract at residues 109–138 (KRQKLSRAIAKGKDNLKEYKLNMSIESKKR) is basic motif. Positions 139-160 (LVTCLHLLKLANKQLSDKISCL) are leucine-zipper. Disordered stretches follow at residues 170-201 (HPLH…DEEF), 305-327 (LQQQ…SSVT), and 378-404 (QQQQ…DSKD). The segment covering 186-201 (GEDETSSDEDDDDEEF) has biased composition (acidic residues). Positions 200–206 (EFFDASE) match the FFAT motif. Residues 378–387 (QQQQYRQQQQ) show a composition bias toward low complexity. Over residues 394 to 404 (KPSQDNVDSKD) the composition is skewed to polar residues.

Interacts with SCS2.

The protein localises to the endoplasmic reticulum. Its subcellular location is the nucleus. In terms of biological role, negative regulator of the transcriptional complex INO2-INO4 in response to phospholipid precursor availability. When precursors become limiting, OPI1 is retained at the endoplasmic reticulum (ER) and INO2-INO4 activates INO1 and other genes required for phospholipid biosynthesis, whereas abundant precursor availability results in targeting of OPI1 to the nucleus to repress transcription of these genes. Binds directly to phosphatidic acid, which is required for ER targeting and may act as sensing mechanism for precursor availability, as phosphatidic acid becomes rapidly depleted upon phospholipid biosynthesis. The sequence is that of Transcriptional repressor OPI1 (OPI1) from Saccharomyces cerevisiae (strain ATCC 204508 / S288c) (Baker's yeast).